The following is a 135-amino-acid chain: Probable histone H2A.8 (135 aa).

The protein belongs to the histone H2A family. In terms of assembly, the nucleosome is a histone octamer containing two molecules each of H2A, H2B, H3 and H4 assembled in one H3-H4 heterotetramer and two H2A-H2B heterodimers. The octamer wraps approximately 147 bp of DNA.

The protein localises to the nucleus. It is found in the chromosome. Core component of nucleosome. Nucleosomes wrap and compact DNA into chromatin, limiting DNA accessibility to the cellular machineries which require DNA as a template. Histones thereby play a central role in transcription regulation, DNA repair, DNA replication and chromosomal stability. DNA accessibility is regulated via a complex set of post-translational modifications of histones, also called histone code, and nucleosome remodeling. This chain is Probable histone H2A.8, found in Oryza sativa subsp. indica (Rice).